The primary structure comprises 396 residues: Tryptophan synthase beta chain 1 (396 aa).

At K86 the chain carries N6-(pyridoxal phosphate)lysine.

It belongs to the TrpB family. As to quaternary structure, tetramer of two alpha and two beta chains. Requires pyridoxal 5'-phosphate as cofactor.

It catalyses the reaction (1S,2R)-1-C-(indol-3-yl)glycerol 3-phosphate + L-serine = D-glyceraldehyde 3-phosphate + L-tryptophan + H2O. It functions in the pathway amino-acid biosynthesis; L-tryptophan biosynthesis; L-tryptophan from chorismate: step 5/5. Its function is as follows. The beta subunit is responsible for the synthesis of L-tryptophan from indole and L-serine. The sequence is that of Tryptophan synthase beta chain 1 (trpB1) from Vibrio parahaemolyticus serotype O3:K6 (strain RIMD 2210633).